We begin with the raw amino-acid sequence, 568 residues long: Vitamin H transporter 1 (568 aa).

The next 12 membrane-spanning stretches (helical) occupy residues isoleucine 85–leucine 105, glycine 123–phenylalanine 143, isoleucine 158–glycine 178, tyrosine 187–tyrosine 207, isoleucine 222–glycine 242, tryptophan 257–leucine 277, valine 345–tyrosine 365, leucine 384–tyrosine 404, phenylalanine 411–alanine 431, glycine 439–cysteine 459, valine 470–threonine 490, and asparagine 508–leucine 528. The disordered stretch occupies residues valine 547–alanine 568.

The protein belongs to the major facilitator superfamily. Allantoate permease family.

The protein localises to the membrane. Involved in uptake of biotin and desthiobiotin with the concomitant entry of protons. This chain is Vitamin H transporter 1 (vht1), found in Schizosaccharomyces pombe (strain 972 / ATCC 24843) (Fission yeast).